A 105-amino-acid chain; its full sequence is Large ribosomal subunit protein P2 (105 aa).

Positions 84–105 (AEAKKEEPEEEADDDMGFGLFD) are disordered.

It belongs to the eukaryotic ribosomal protein P1/P2 family. In terms of assembly, P1 and P2 exist as dimers at the large ribosomal subunit. Phosphorylated.

Functionally, plays an important role in the elongation step of protein synthesis. The sequence is that of Large ribosomal subunit protein P2 (ARP-1) from Leishmania donovani.